We begin with the raw amino-acid sequence, 120 residues long: NAD(P)H-quinone oxidoreductase subunit 3, chloroplastic (120 aa).

3 helical membrane-spanning segments follow: residues 9–29 (IFWV…LISG), 64–84 (MFAL…PWAM), and 88–108 (VLGV…IVGL).

It belongs to the complex I subunit 3 family. NDH is composed of at least 16 different subunits, 5 of which are encoded in the nucleus.

It localises to the plastid. It is found in the chloroplast thylakoid membrane. It catalyses the reaction a plastoquinone + NADH + (n+1) H(+)(in) = a plastoquinol + NAD(+) + n H(+)(out). The enzyme catalyses a plastoquinone + NADPH + (n+1) H(+)(in) = a plastoquinol + NADP(+) + n H(+)(out). Functionally, NDH shuttles electrons from NAD(P)H:plastoquinone, via FMN and iron-sulfur (Fe-S) centers, to quinones in the photosynthetic chain and possibly in a chloroplast respiratory chain. The immediate electron acceptor for the enzyme in this species is believed to be plastoquinone. Couples the redox reaction to proton translocation, and thus conserves the redox energy in a proton gradient. The chain is NAD(P)H-quinone oxidoreductase subunit 3, chloroplastic from Cucumis sativus (Cucumber).